Reading from the N-terminus, the 193-residue chain is Protein hunchback (193 aa).

Disordered regions lie at residues 16–126 (SHHH…ATTT) and 146–193 (SNDK…KYMA). Over residues 17–31 (HHHHHHHAHHSHHQH) the composition is skewed to basic residues. Composition is skewed to low complexity over residues 35–46 (SNSNSNASSPHQ) and 56–77 (SSNN…QQQQ). Polar residues predominate over residues 89–99 (PSPSNNDQNSR). Basic and acidic residues predominate over residues 174–193 (EPEKEHDLMSNSSEDMKYMA).

The protein belongs to the hunchback C2H2-type zinc-finger protein family.

The protein resides in the nucleus. Its function is as follows. Gap class segmentation protein that controls development of head structures. The sequence is that of Protein hunchback (hb) from Drosophila iki (Fruit fly).